A 158-amino-acid chain; its full sequence is Endoribonuclease YbeY (158 aa).

Histidine 117, histidine 121, and histidine 127 together coordinate Zn(2+).

The protein belongs to the endoribonuclease YbeY family. Zn(2+) serves as cofactor.

It localises to the cytoplasm. In terms of biological role, single strand-specific metallo-endoribonuclease involved in late-stage 70S ribosome quality control and in maturation of the 3' terminus of the 16S rRNA. In Francisella philomiragia subsp. philomiragia (strain ATCC 25017 / CCUG 19701 / FSC 153 / O#319-036), this protein is Endoribonuclease YbeY.